Consider the following 305-residue polypeptide: Glycine--tRNA ligase alpha subunit (305 aa).

This sequence belongs to the class-II aminoacyl-tRNA synthetase family. In terms of assembly, tetramer of two alpha and two beta subunits.

It is found in the cytoplasm. It catalyses the reaction tRNA(Gly) + glycine + ATP = glycyl-tRNA(Gly) + AMP + diphosphate. In Streptococcus uberis (strain ATCC BAA-854 / 0140J), this protein is Glycine--tRNA ligase alpha subunit.